A 330-amino-acid polypeptide reads, in one-letter code: Low-redox potential peroxidase (330 aa).

The first 24 residues, 1-24 (MRSSTHIFVSFVVYCGVFVTSAIA), serve as a signal peptide directing secretion. An N-linked (GlcNAc...) asparagine glycan is attached at Asn27. Cystine bridges form between Cys34–Cys285, Cys54–Cys123, and Cys251–Cys314. Ca(2+) contacts are provided by Gly69, Asp71, and Ser73. Heme b is bound at residue His178. Ca(2+) contacts are provided by Ser179, Asp196, Thr198, and Asp203.

This sequence belongs to the peroxidase family. Ligninase subfamily. Requires Ca(2+) as cofactor. Heme b serves as cofactor.

Its subcellular location is the secreted. It catalyses the reaction 2 a phenolic donor + H2O2 = 2 a phenolic radical donor + 2 H2O. Can oxidize the lignin redox mediator veratryl alcohol to veratryl aldehyde. May be involved in oxidation of lignocellulose substrates. The protein is Low-redox potential peroxidase (LnP) of Taiwanofungus camphoratus (Poroid brown-rot fungus).